We begin with the raw amino-acid sequence, 232 residues long: Large ribosomal subunit protein uL16m (232 aa).

The transit peptide at 1–41 (MFPYLTRMNLSIKMGGLTLKESSPNAFLNNTTIARRFKHEY) directs the protein to the mitochondrion.

Belongs to the universal ribosomal protein uL16 family. As to quaternary structure, component of the mitochondrial large ribosomal subunit (mt-LSU). Mature yeast 74S mitochondrial ribosomes consist of a small (37S) and a large (54S) subunit. The 37S small subunit contains a 15S ribosomal RNA (15S mt-rRNA) and 34 different proteins. The 54S large subunit contains a 21S rRNA (21S mt-rRNA) and 46 different proteins.

It localises to the mitochondrion. Its function is as follows. Component of the mitochondrial ribosome (mitoribosome), a dedicated translation machinery responsible for the synthesis of mitochondrial genome-encoded proteins, including at least some of the essential transmembrane subunits of the mitochondrial respiratory chain. The mitoribosomes are attached to the mitochondrial inner membrane and translation products are cotranslationally integrated into the membrane. This is Large ribosomal subunit protein uL16m (MRPL16) from Saccharomyces cerevisiae (strain ATCC 204508 / S288c) (Baker's yeast).